A 547-amino-acid polypeptide reads, in one-letter code: MEYHPSSQSPQVNPGMESQQGGYTYTYQQPAPPNSLHLQHPSILTRLPPLSSSVVSPSLASLPPFTPTSTYHSIAALTPPSYPQSSSAPSNNSYTIVPSPHDPSNAYSMHHVLQNTAPQSVPSPSPIEMVPPSPPKTGSNNSAPVTGKTVQSGNALNNSGLVKRQARKRTKTGCLTCRKRRIKCDERKPICYNCIKSKRQCEGYTHFPRPSGTFTASRRIPVSSLLSEPAPHGLAGQPTHPTFLYYIQSVAPSLCLWDACHFPPLSPYSSFSSIYWSSTVPELALRNPNISVALYAFASAKRHLTDDAVAFARQARVALTNITTTDSLLILVLLAVTQLYIPKSDIQLFNFAVDQVVKFDASLMTSPSDEIITYLLRRMFIRQVVLAGIVKPLASGLNPLPLLKCDLPPATTPTAVLDESLFHLGLRKLCHEKGLEPEFTKWSKNCPIDKADLPRLALLMIHAVFTSPVSLAQWVELILQNPDPTPAIHIARACLLAVHGVVDLGDLQMKVEKCVQSCEERQLQATISNFSTEVAQTNSSALAIGCQ.

The span at 1–18 (MEYHPSSQSPQVNPGMES) shows a compositional bias: polar residues. Disordered stretches follow at residues 1–41 (MEYH…LQHP) and 80–165 (PSYP…VKRQ). Composition is skewed to low complexity over residues 19 to 29 (QQGGYTYTYQQ) and 83 to 94 (PQSSSAPSNNSY). The segment covering 121-135 (VPSPSPIEMVPPSPP) has biased composition (pro residues). The segment covering 136–160 (KTGSNNSAPVTGKTVQSGNALNNSG) has biased composition (polar residues). Residues 174–201 (CLTCRKRRIKCDERKPICYNCIKSKRQC) constitute a DNA-binding region (zn(2)-C6 fungal-type).

The protein localises to the nucleus. This is an uncharacterized protein from Schizosaccharomyces pombe (strain 972 / ATCC 24843) (Fission yeast).